A 156-amino-acid chain; its full sequence is ATP synthase subunit b (156 aa).

The helical transmembrane segment at 5 to 25 threads the bilayer; the sequence is LTMIGQAIAFFIFVVFCMKYV.

It belongs to the ATPase B chain family. In terms of assembly, F-type ATPases have 2 components, F(1) - the catalytic core - and F(0) - the membrane proton channel. F(1) has five subunits: alpha(3), beta(3), gamma(1), delta(1), epsilon(1). F(0) has three main subunits: a(1), b(2) and c(10-14). The alpha and beta chains form an alternating ring which encloses part of the gamma chain. F(1) is attached to F(0) by a central stalk formed by the gamma and epsilon chains, while a peripheral stalk is formed by the delta and b chains.

The protein resides in the cell inner membrane. F(1)F(0) ATP synthase produces ATP from ADP in the presence of a proton or sodium gradient. F-type ATPases consist of two structural domains, F(1) containing the extramembraneous catalytic core and F(0) containing the membrane proton channel, linked together by a central stalk and a peripheral stalk. During catalysis, ATP synthesis in the catalytic domain of F(1) is coupled via a rotary mechanism of the central stalk subunits to proton translocation. Its function is as follows. Component of the F(0) channel, it forms part of the peripheral stalk, linking F(1) to F(0). This is ATP synthase subunit b from Hahella chejuensis (strain KCTC 2396).